The following is an 88-amino-acid chain: ATP synthase subunit c (88 aa).

Transmembrane regions (helical) follow at residues 10 to 30 and 68 to 88; these read ILAASAIGAGLAMIAGLGPGI and GIYSLVIALILLFANPLIRLL.

Belongs to the ATPase C chain family. In terms of assembly, F-type ATPases have 2 components, F(1) - the catalytic core - and F(0) - the membrane proton channel. F(1) has five subunits: alpha(3), beta(3), gamma(1), delta(1), epsilon(1). F(0) has three main subunits: a(1), b(2) and c(10-14). The alpha and beta chains form an alternating ring which encloses part of the gamma chain. F(1) is attached to F(0) by a central stalk formed by the gamma and epsilon chains, while a peripheral stalk is formed by the delta and b chains.

The protein localises to the cell membrane. F(1)F(0) ATP synthase produces ATP from ADP in the presence of a proton or sodium gradient. F-type ATPases consist of two structural domains, F(1) containing the extramembraneous catalytic core and F(0) containing the membrane proton channel, linked together by a central stalk and a peripheral stalk. During catalysis, ATP synthesis in the catalytic domain of F(1) is coupled via a rotary mechanism of the central stalk subunits to proton translocation. Its function is as follows. Key component of the F(0) channel; it plays a direct role in translocation across the membrane. A homomeric c-ring of between 10-14 subunits forms the central stalk rotor element with the F(1) delta and epsilon subunits. The polypeptide is ATP synthase subunit c (Alkaliphilus oremlandii (strain OhILAs) (Clostridium oremlandii (strain OhILAs))).